A 171-amino-acid chain; its full sequence is Calcium-binding protein F-like (171 aa).

EF-hand domains lie at 6 to 41 (KIFE…KMNG), 57 to 80 (IDMD…KAKK), 89 to 124 (AALA…RGYT), and 130 to 159 (DQYL…RRID). Positions 19, 21, 23, 25, and 30 each coordinate Ca(2+). Asp102, Asp104, Asp106, Lys108, Glu113, Asp137, Asp139, Asp141, Cys143, and Glu148 together coordinate Ca(2+).

The chain is Calcium-binding protein F-like (cbp12) from Dictyostelium discoideum (Social amoeba).